A 220-amino-acid chain; its full sequence is GTP-binding protein YPT53 (220 aa).

Residues 19–26 (GESAVGKS), 67–71 (DTAGQ), and 125–128 (NKMD) each bind GTP. Residues Cys-218 and Cys-220 are each lipidated (S-geranylgeranyl cysteine). Cysteine methyl ester is present on Cys-220.

It belongs to the small GTPase superfamily. Rab family.

The protein localises to the cell membrane. In terms of biological role, required for transport in the endocytic pathway and for correct sorting of the vacuolar hydrolases suggesting a possible intersection of the endocytic with the vacuolar sorting pathway. May be involved in recruiting the MON1-CCZ1 complex to membranes enriched in phosphatidylinositol 3-phosphate (PtdIns[3]P) or other charged lipids, leading to recruitment of YPT7. The sequence is that of GTP-binding protein YPT53 (YPT53) from Saccharomyces cerevisiae (strain ATCC 204508 / S288c) (Baker's yeast).